The sequence spans 363 residues: 3-isopropylmalate dehydrogenase (363 aa).

76–89 (GPKWDTLPGHLRPE) is a binding site for NAD(+). 4 residues coordinate substrate: R96, R106, R134, and D223. Positions 223, 247, and 251 each coordinate Mg(2+). Position 281 to 293 (281 to 293 (GSAPDIAGKGVAN)) interacts with NAD(+).

It belongs to the isocitrate and isopropylmalate dehydrogenases family. LeuB type 1 subfamily. In terms of assembly, homodimer. Mg(2+) is required as a cofactor. The cofactor is Mn(2+).

It is found in the cytoplasm. It catalyses the reaction (2R,3S)-3-isopropylmalate + NAD(+) = 4-methyl-2-oxopentanoate + CO2 + NADH. It functions in the pathway amino-acid biosynthesis; L-leucine biosynthesis; L-leucine from 3-methyl-2-oxobutanoate: step 3/4. Catalyzes the oxidation of 3-carboxy-2-hydroxy-4-methylpentanoate (3-isopropylmalate) to 3-carboxy-4-methyl-2-oxopentanoate. The product decarboxylates to 4-methyl-2 oxopentanoate. This Halalkalibacterium halodurans (strain ATCC BAA-125 / DSM 18197 / FERM 7344 / JCM 9153 / C-125) (Bacillus halodurans) protein is 3-isopropylmalate dehydrogenase.